We begin with the raw amino-acid sequence, 312 residues long: Glycerol 2-dehydrogenase (NADP(+)) (312 aa).

Tyrosine 56 acts as the Proton donor in catalysis. Histidine 112 is a binding site for substrate. Position 220-274 (220-274 (SPLGSTDAPLLKEPVILEIAKKNNVQPGHVVISWHVQRGYVVLPKSVNPDRIKTN)) interacts with NADP(+). Phosphoserine is present on serine 306.

This sequence belongs to the aldo/keto reductase family.

The protein localises to the cytoplasm. It catalyses the reaction glycerol + NADP(+) = dihydroxyacetone + NADPH + H(+). In terms of biological role, glycerol dehydrogenase involved in glycerol catabolism under microaerobic conditions. Has mRNA binding activity. The chain is Glycerol 2-dehydrogenase (NADP(+)) (GCY1) from Saccharomyces cerevisiae (strain ATCC 204508 / S288c) (Baker's yeast).